The following is a 735-amino-acid chain: Translation factor GUF1 homolog, chloroplastic (735 aa).

Disordered regions lie at residues 1 to 38 (MAVP…PSTS) and 106 to 126 (PENA…GVDN). A chloroplast-targeting transit peptide spans 1–47 (MAVPTIPSPACISQSANGSIISTRRSTETNPRQHPSTSYRCAGRVVR). A compositionally biased stretch (polar residues) spans 11–38 (CISQSANGSIISTRRSTETNPRQHPSTS). The span at 106–115 (PENAEKDYSK) shows a compositional bias: basic and acidic residues. The tr-type G domain maps to 137 to 319 (SNIRNFSIIA…AVVKKIPPPK (183 aa)). GTP is bound by residues 146–153 (AHIDHGKS), 212–216 (DTPGH), and 266–269 (NKID).

This sequence belongs to the TRAFAC class translation factor GTPase superfamily. Classic translation factor GTPase family. LepA subfamily.

It localises to the plastid. Its subcellular location is the chloroplast. It carries out the reaction GTP + H2O = GDP + phosphate + H(+). Promotes chloroplast protein synthesis. May act as a fidelity factor of the translation reaction, by catalyzing a one-codon backward translocation of tRNAs on improperly translocated ribosomes. The chain is Translation factor GUF1 homolog, chloroplastic from Physcomitrium patens (Spreading-leaved earth moss).